The chain runs to 76 residues: Large ribosomal subunit protein bL31 (76 aa).

The protein belongs to the bacterial ribosomal protein bL31 family. Type A subfamily. In terms of assembly, part of the 50S ribosomal subunit.

Its function is as follows. Binds the 23S rRNA. This is Large ribosomal subunit protein bL31 from Picosynechococcus sp. (strain ATCC 27264 / PCC 7002 / PR-6) (Agmenellum quadruplicatum).